A 40-amino-acid chain; its full sequence is Photosystem II reaction center protein J (40 aa).

A helical membrane pass occupies residues I8–F28.

It belongs to the PsbJ family. PSII is composed of 1 copy each of membrane proteins PsbA, PsbB, PsbC, PsbD, PsbE, PsbF, PsbH, PsbI, PsbJ, PsbK, PsbL, PsbM, PsbT, PsbX, PsbY, PsbZ, Psb30/Ycf12, at least 3 peripheral proteins of the oxygen-evolving complex and a large number of cofactors. It forms dimeric complexes.

The protein localises to the plastid. It localises to the chloroplast thylakoid membrane. In terms of biological role, one of the components of the core complex of photosystem II (PSII). PSII is a light-driven water:plastoquinone oxidoreductase that uses light energy to abstract electrons from H(2)O, generating O(2) and a proton gradient subsequently used for ATP formation. It consists of a core antenna complex that captures photons, and an electron transfer chain that converts photonic excitation into a charge separation. This is Photosystem II reaction center protein J from Triticum aestivum (Wheat).